A 591-amino-acid chain; its full sequence is Complement component C8 beta chain (591 aa).

Residues 1-32 form the signal peptide; the sequence is MKNSRTWAWRAPVELFLLCAALGCLSLPGSRG. The propeptide occupies 33–54; sequence ERPHSFGSNAVNKSFAKSRQMR. One can recognise a TSP type-1 1 domain in the interval 64–117; it reads DCELSSWSSWTTCDPCQKKRYRYAYLLQPSQFHGEPCNFSDKEVEDCVTNRPCG. 7 disulfides stabilise this stretch: cysteine 65-cysteine 100, cysteine 76-cysteine 110, cysteine 79-cysteine 116, cysteine 122-cysteine 133, cysteine 127-cysteine 146, cysteine 140-cysteine 155, and cysteine 162-cysteine 200. Tryptophan 70 and tryptophan 73 each carry a C-linked (Man) tryptophan glycan. A glycan (N-linked (GlcNAc...) asparagine) is linked at asparagine 101. The LDL-receptor class A domain occupies 120–157; sequence VRCEGFVCAQTGRCVNRRLLCNGDNDCGDQSDEANCRR. Residues leucine 138, asparagine 141, aspartate 143, aspartate 145, aspartate 151, and glutamate 152 each contribute to the Ca(2+) site. One can recognise an MACPF domain in the interval 158–504; that stretch reads IYKKCQHEMD…EFQKEVSSCH (347 aa). N-linked (GlcNAc...) asparagine glycosylation occurs at asparagine 243. 4 beta stranded membrane-spanning segments follow: residues 252 to 259, 262 to 269, 379 to 386, and 392 to 399; these read SGFSFGFK, GIFELGIS, AKNDFKIG, and VYVSLGVS. A disulfide bridge links cysteine 378 with cysteine 403. Threonine 418 is modified (phosphothreonine). 4 disulfides stabilise this stretch: cysteine 503–cysteine 550, cysteine 505–cysteine 521, cysteine 508–cysteine 523, and cysteine 525–cysteine 534. The 31-residue stretch at 505–535 folds into the EGF-like domain; sequence CAPCQGNGVPVLKGSRCDCICPVGSQGLACE. The 47-residue stretch at 545 to 591 folds into the TSP type-1 2 domain; the sequence is DGKWNCWSNWSSCSGRRKTRQRQCNNPPPQNGGSPCSGPASETLDCS. Tryptophan 551 and tryptophan 554 each carry a C-linked (Man) tryptophan glycan. Cysteines 557 and 590 form a disulfide. The disordered stretch occupies residues 568–591; it reads CNNPPPQNGGSPCSGPASETLDCS.

The protein belongs to the complement C6/C7/C8/C9 family. As to quaternary structure, heterotrimer of 3 chains: alpha (C8A), beta (C8B) and gamma (C8G); the alpha and gamma chains are disulfide bonded. Component of the membrane attack complex (MAC), composed of complement C5b, C6, C7, C8A, C8B, C8G and multiple copies of the pore-forming subunit C9. In terms of processing, N-glycosylated; contains one or two bound glycans. Not O-glycosylated.

The protein resides in the secreted. It localises to the target cell membrane. With respect to regulation, membrane attack complex (MAC) assembly is inhibited by CD59, thereby protecting self-cells from damage during complement activation. CD59 acts by binding to the beta-haipins of C8 (C8A and C8B), forming an intermolecular beta-sheet that prevents incorporation of the multiple copies of C9 required for complete formation of the osmolytic pore. MAC assembly is also inhibited by clusterin (CLU) chaperones that inhibit polymerization of C9. Its function is as follows. Component of the membrane attack complex (MAC), a multiprotein complex activated by the complement cascade, which inserts into a target cell membrane and forms a pore, leading to target cell membrane rupture and cell lysis. The MAC is initiated by proteolytic cleavage of C5 into complement C5b in response to the classical, alternative, lectin and GZMK complement pathways. The complement pathways consist in a cascade of proteins that leads to phagocytosis and breakdown of pathogens and signaling that strengthens the adaptive immune system. C8B, together with C8A and C8G, inserts into the target membrane, but does not form pores by itself. During MAC assembly, associates with C5b, C6 and C7 to form the C5b8 intermediate complex that inserts into the target membrane and traverses the bilayer increasing membrane rigidity. The polypeptide is Complement component C8 beta chain (Homo sapiens (Human)).